The primary structure comprises 410 residues: Elongation factor Tu, chloroplastic (410 aa).

One can recognise a tr-type G domain in the interval 10 to 214; sequence KPHVNIGTIG…NVDEYIPTPE (205 aa). The tract at residues 19-26 is G1; sequence GHVDHGKT. 19–26 contacts GTP; it reads GHVDHGKT. Position 26 (threonine 26) interacts with Mg(2+). The segment at 60 to 64 is G2; sequence GITIN. The tract at residues 81–84 is G3; it reads DCPG. GTP contacts are provided by residues 81–85 and 136–139; these read DCPGH and NKED. A G4 region spans residues 136–139; the sequence is NKED. The interval 174–176 is G5; sequence SAL.

The protein belongs to the TRAFAC class translation factor GTPase superfamily. Classic translation factor GTPase family. EF-Tu/EF-1A subfamily.

The protein localises to the plastid. It is found in the chloroplast stroma. The enzyme catalyses GTP + H2O = GDP + phosphate + H(+). Functionally, GTP hydrolase that promotes the GTP-dependent binding of aminoacyl-tRNA to the A-site of ribosomes during protein biosynthesis. In Bigelowiella natans (Pedinomonas minutissima), this protein is Elongation factor Tu, chloroplastic (tufA).